The sequence spans 106 residues: Large ribosomal subunit protein eL42 (106 aa).

It belongs to the eukaryotic ribosomal protein eL42 family. Component of the large ribosomal subunit.

It is found in the cytoplasm. In terms of biological role, component of the large ribosomal subunit. The ribosome is a large ribonucleoprotein complex responsible for the synthesis of proteins in the cell. This is Large ribosomal subunit protein eL42 (RPL36A) from Papio anubis (Olive baboon).